Consider the following 1033-residue polypeptide: PDZ domain-containing protein 7 (1033 aa).

PDZ domains lie at 86–168 (SVRV…RMGR) and 210–293 (IVHL…ETGR). The span at 323-344 (ESSSSVSSCASSAPYSSGSLPS) shows a compositional bias: low complexity. Disordered stretches follow at residues 323–380 (ESSS…GGRV), 444–464 (KQQR…LQRS), 754–864 (EPLS…KTVT), and 943–1033 (MELV…PRIP). Residues 770 to 784 (AQSRSRSRSRSRSRS) show a composition bias toward basic residues. Residues 785–797 (SRGQGKSPGRRSP) show a composition bias toward low complexity. One can recognise a PDZ 3 domain in the interval 862–934 (TVTLSKMKQS…QRAVDTIRRA (73 aa)). Pro residues predominate over residues 991-1000 (PEPPTNPQTP).

Homodimerizes (via PDZ2 domain). Component of USH2 complex, composed of ADGRV1, PDZD7, USH2A and WHRN. Interacts (via PDZ domains) with WHRN; the interaction is direct. Interacts with USH1G. Interacts with ADGRV1 (via the cytoplasmic region). Interacts with USH2A (via the cytoplasmic region). Interacts with MYO7A (via MyTH4-FERM domains). As to expression, weakly expressed in the inner ear. Expressed in the retinal pigment epithelium.

The protein resides in the cell projection. Its subcellular location is the cilium. It localises to the nucleus. It is found in the stereocilium. Functionally, in cochlear developing hair cells, essential in organizing the USH2 complex at stereocilia ankle links. Blocks inhibition of adenylate cyclase activity mediated by ADGRV1. In Homo sapiens (Human), this protein is PDZ domain-containing protein 7.